Reading from the N-terminus, the 469-residue chain is Endoplasmic reticulum oxidoreductin-1 (469 aa).

Positions 1-36 are cleaved as a signal peptide; sequence MGKGAIKEEESEKKRKTWRWPLATLVVVFLAVAVSS. 6 cysteine pairs are disulfide-bonded: cysteine 52/cysteine 71, cysteine 54/cysteine 69, cysteine 108/cysteine 372, cysteine 117/cysteine 122, cysteine 222/cysteine 231, and cysteine 375/cysteine 378. Residues arginine 201, threonine 203, and tryptophan 214 each contribute to the FAD site. Residues serine 242, histidine 245, arginine 275, and arginine 282 each contribute to the FAD site. An N-linked (GlcNAc...) asparagine glycan is attached at asparagine 365.

The protein belongs to the EROs family. In terms of assembly, may function both as a monomer and a homodimer. The cofactor is FAD. N-glycosylated.

The protein resides in the endoplasmic reticulum membrane. Functionally, essential oxidoreductase that oxidizes proteins in the endoplasmic reticulum to produce disulfide bonds. Acts by oxidizing directly PDI isomerase through a direct disulfide exchange. Does not act as a direct oxidant of folding substrate, but relies on PDI to transfer oxidizing equivalent. Does not oxidize all PDI related proteins, suggesting that it can discriminate between PDI and related proteins. Its reoxidation probably involves electron transfer to molecular oxygen via FAD. Acts independently of glutathione. May be responsible for a significant proportion of reactive oxygen species (ROS) in the cell, thereby being a source of oxidative stress. The protein is Endoplasmic reticulum oxidoreductin-1 (AERO1) of Arabidopsis thaliana (Mouse-ear cress).